The sequence spans 930 residues: Type I restriction enzyme SsaAORF53P endonuclease subunit (930 aa).

Positions 254 to 418 (HQATETSNNG…DGRSTADIFG (165 aa)) constitute a Helicase ATP-binding domain. An ATP-binding site is contributed by 268 to 274 (TTGSGKT).

It belongs to the HsdR family. As to quaternary structure, the type I restriction/modification system is composed of three polypeptides R, M and S.

It catalyses the reaction Endonucleolytic cleavage of DNA to give random double-stranded fragments with terminal 5'-phosphates, ATP is simultaneously hydrolyzed.. Its function is as follows. The restriction (R) subunit of a type I restriction enzyme that recognizes an undetermined sequence and cleaves a random distance away. Subunit R is required for both nuclease and ATPase activities, but not for modification. After locating a non-methylated recognition site, the enzyme complex serves as a molecular motor that translocates DNA in an ATP-dependent manner until a collision occurs that triggers cleavage. This Staphylococcus saprophyticus subsp. saprophyticus (strain ATCC 15305 / DSM 20229 / NCIMB 8711 / NCTC 7292 / S-41) protein is Type I restriction enzyme SsaAORF53P endonuclease subunit.